Here is a 303-residue protein sequence, read N- to C-terminus: Phytochrome-associated serine/threonine-protein phosphatase (303 aa).

Residues Asp50, His52, Asp78, and Asn110 each coordinate Zn(2+). The active-site Proton donor is His111. Residues His160 and His234 each contribute to the Zn(2+) site.

Belongs to the PPP phosphatase family. PP-6 (PP-V) subfamily. In terms of assembly, interacts with PHYA and PHYB, mostly when they are phosphorylated and in Pfr forms. The cofactor is Zn(2+). Mostly expressed in flowers and stems.

Its subcellular location is the cytoplasm. The catalysed reaction is O-phospho-L-seryl-[protein] + H2O = L-seryl-[protein] + phosphate. It carries out the reaction O-phospho-L-threonyl-[protein] + H2O = L-threonyl-[protein] + phosphate. Catalytic subunit of protein phosphatase 6 (PP6). Dephosphorylates phosphorylated phytochromes, with a preference toward Pfr forms. Plays a major role in the photoperiodic control of flowering time in long days by modulating phytochrome signals in flowering time control. This chain is Phytochrome-associated serine/threonine-protein phosphatase, found in Pisum sativum (Garden pea).